We begin with the raw amino-acid sequence, 481 residues long: Argininosuccinate lyase (481 aa).

This sequence belongs to the lyase 1 family. Argininosuccinate lyase subfamily.

Its subcellular location is the cytoplasm. It catalyses the reaction 2-(N(omega)-L-arginino)succinate = fumarate + L-arginine. It functions in the pathway amino-acid biosynthesis; L-arginine biosynthesis; L-arginine from L-ornithine and carbamoyl phosphate: step 3/3. This is Argininosuccinate lyase from Methanococcus maripaludis (strain C5 / ATCC BAA-1333).